The chain runs to 426 residues: D-tagatose-1,6-bisphosphate aldolase subunit KbaZ (426 aa).

Belongs to the GatZ/KbaZ family. KbaZ subfamily. As to quaternary structure, forms a complex with KbaY.

The protein operates within carbohydrate metabolism; D-tagatose 6-phosphate degradation; D-glyceraldehyde 3-phosphate and glycerone phosphate from D-tagatose 6-phosphate: step 2/2. Its function is as follows. Component of the tagatose-1,6-bisphosphate aldolase KbaYZ that is required for full activity and stability of the Y subunit. Could have a chaperone-like function for the proper and stable folding of KbaY. When expressed alone, KbaZ does not show any aldolase activity. This is D-tagatose-1,6-bisphosphate aldolase subunit KbaZ from Escherichia coli (strain SMS-3-5 / SECEC).